The following is a 464-amino-acid chain: 3-isopropylmalate dehydratase large subunit (464 aa).

[4Fe-4S] cluster-binding residues include cysteine 337, cysteine 397, and cysteine 400.

Belongs to the aconitase/IPM isomerase family. LeuC type 1 subfamily. In terms of assembly, heterodimer of LeuC and LeuD. The cofactor is [4Fe-4S] cluster.

It carries out the reaction (2R,3S)-3-isopropylmalate = (2S)-2-isopropylmalate. It functions in the pathway amino-acid biosynthesis; L-leucine biosynthesis; L-leucine from 3-methyl-2-oxobutanoate: step 2/4. Its function is as follows. Catalyzes the isomerization between 2-isopropylmalate and 3-isopropylmalate, via the formation of 2-isopropylmaleate. This chain is 3-isopropylmalate dehydratase large subunit, found in Bacillus cytotoxicus (strain DSM 22905 / CIP 110041 / 391-98 / NVH 391-98).